The chain runs to 213 residues: Ras-related protein Rab-4B (213 aa).

Ala-2 carries the post-translational modification N-acetylalanine. 6 residues coordinate GDP: Gly-18, Thr-19, Gly-20, Lys-21, Ser-22, and Cys-23. Residues Gly-18, Thr-19, Gly-20, Lys-21, Ser-22, Cys-23, Ser-37, His-39, and Thr-40 each contribute to the GTP site. A Mg(2+)-binding site is contributed by Ser-22. The Switch 1 motif lies at 39 to 44; that stretch reads HTIGVE. Positions 40 and 63 each coordinate Mg(2+). Residues 65 to 74 carry the Switch 2 motif; the sequence is AGQERFRSVT. Residue Gly-66 participates in GTP binding. The residue at position 67 (Gln-67) is a 5-glutamyl serotonin. 5 residues coordinate GDP: Asn-121, Lys-122, Asp-124, Ala-152, and Leu-153. GTP contacts are provided by Asn-121, Lys-122, Asp-124, Ala-152, and Leu-153. Phosphoserine is present on residues Ser-185 and Ser-193. 2 S-geranylgeranyl cysteine lipidation sites follow: Cys-211 and Cys-213. Cys-213 is modified (cysteine methyl ester).

It belongs to the small GTPase superfamily. Rab family. As to quaternary structure, interacts (GTP-bound form) with RUFY1; the interaction allows endosomal tethering and fusion. It depends on Mg(2+) as a cofactor. Serotonylation of Gln-67 by TGM2 during activation and aggregation of platelets leads to constitutive activation of GTPase activity.

The protein localises to the cell membrane. Its subcellular location is the early endosome membrane. The catalysed reaction is GTP + H2O = GDP + phosphate + H(+). With respect to regulation, regulated by guanine nucleotide exchange factors (GEFs) which promote the exchange of bound GDP for free GTP. Regulated by GTPase activating proteins (GAPs) which increase the GTP hydrolysis activity. Inhibited by GDP dissociation inhibitors (GDIs). In terms of biological role, the small GTPases Rab are key regulators of intracellular membrane trafficking, from the formation of transport vesicles to their fusion with membranes. Rabs cycle between an inactive GDP-bound form and an active GTP-bound form that is able to recruit to membranes different set of downstream effectors directly responsible for vesicle formation, movement, tethering and fusion. RAB4B mediates endosomal tethering and fusion through the interaction with RUFY1 and RAB14. Acts as a regulator of platelet alpha-granule release during activation and aggregation of platelets. This Homo sapiens (Human) protein is Ras-related protein Rab-4B.